Reading from the N-terminus, the 227-residue chain is Ribonuclease 3 (227 aa).

The 123-residue stretch at 6-128 (ASDYQQRIGY…VIAAIYLDAD (123 aa)) folds into the RNase III domain. Glu41 serves as a coordination point for Mg(2+). Asp45 is a catalytic residue. 2 residues coordinate Mg(2+): Asp114 and Glu117. Glu117 is an active-site residue. The 71-residue stretch at 155-225 (DPKTRLQEWL…ASHAINQLDS (71 aa)) folds into the DRBM domain. Residues 203–212 (GEGSSRRLAE) are compositionally biased toward basic and acidic residues. Residues 203–227 (GEGSSRRLAEQDAASHAINQLDSNK) are disordered.

It belongs to the ribonuclease III family. As to quaternary structure, homodimer. Mg(2+) is required as a cofactor.

The protein resides in the cytoplasm. The enzyme catalyses Endonucleolytic cleavage to 5'-phosphomonoester.. In terms of biological role, digests double-stranded RNA. Involved in the processing of primary rRNA transcript to yield the immediate precursors to the large and small rRNAs (23S and 16S). Processes some mRNAs, and tRNAs when they are encoded in the rRNA operon. Processes pre-crRNA and tracrRNA of type II CRISPR loci if present in the organism. The chain is Ribonuclease 3 from Xylella fastidiosa (strain M12).